The chain runs to 536 residues: 3',5'-cyclic-AMP phosphodiesterase 4C (536 aa).

The disordered stretch occupies residues 49–69 (QALLGTPPQSSQQAAPAEESG). A PDEase domain is found at 178-507 (VQTDQEEQLA…EWYQSRVPCS (330 aa)). The active-site Proton donor is the His-254. His-254 provides a ligand contact to 3',5'-cyclic AMP. AMP is bound by residues His-254 and His-258. Zn(2+) contacts are provided by His-258, His-294, Asp-295, and Asp-412. Residues Asp-295, Asp-412, Gln-463, and Phe-466 each coordinate AMP. Position 295 (Asp-295) interacts with Mg(2+). A Mn(2+)-binding site is contributed by Asp-295. The 3',5'-cyclic AMP site is built by Gln-463 and Phe-466. Ser-507 is subject to Phosphoserine.

The protein belongs to the cyclic nucleotide phosphodiesterase family. PDE4 subfamily. Part of a complex containing AKAP5, ADCY5, ADCY6 and PKD2. Requires Zn(2+) as cofactor. It depends on Mg(2+) as a cofactor. Mn(2+) serves as cofactor.

It localises to the cell projection. It is found in the cilium. The enzyme catalyses 3',5'-cyclic AMP + H2O = AMP + H(+). The protein operates within purine metabolism; 3',5'-cyclic AMP degradation; AMP from 3',5'-cyclic AMP: step 1/1. In terms of biological role, hydrolyzes the second messenger cAMP, which is a key regulator of many important physiological processes. This Rattus norvegicus (Rat) protein is 3',5'-cyclic-AMP phosphodiesterase 4C.